Consider the following 244-residue polypeptide: Small ribosomal subunit protein uS2 (244 aa).

It belongs to the universal ribosomal protein uS2 family.

This is Small ribosomal subunit protein uS2 from Hydrogenovibrio crunogenus (strain DSM 25203 / XCL-2) (Thiomicrospira crunogena).